A 313-amino-acid chain; its full sequence is Homeobox protein CDX-2 (313 aa).

Phosphoserine is present on Ser60. The interval 113 to 153 is disordered; it reads HAHHHPHHHPHHPAAAPSCASGLLQTLNPGPPGPAATGAAE. A compositionally biased stretch (basic residues) spans 114–124; that stretch reads AHHHPHHHPHH. Positions 185–215 are interaction with DNA; sequence KDKYRVVYTDHQRLELEKEFHYSRYITIRRK. Residues 185-244 constitute a DNA-binding region (homeobox); that stretch reads KDKYRVVYTDHQRLELEKEFHYSRYITIRRKAELAATLGLSERQVKIWFQNRRAKERKIN. The interval 227–241 is interaction with 5-mCpG DNA; sequence RQVKIWFQNRRAKER. Positions 242 to 313 are disordered; it reads KINKKKLQQQ…GGVLNPTVTQ (72 aa). Low complexity-rich tracts occupy residues 249–261 and 271–300; these read QQQQQQQQQQQLA and QPGSLRSVPEPLSPVSSLQGSVPGSVPGVL. At Ser283 the chain carries Phosphoserine. Positions 283–295 match the 4S motif; modulates transactivation activity and protein stability motif; sequence SPVSSLQGSVPGS.

The protein belongs to the Caudal homeobox family. Can bind DNA as a monomer or homodimer. In terms of processing, ubiquitinated, leading to its degradation by the proteasome. Phosphorylation at Ser-60 reduces transactivation capacity. Phosphorylation at Ser-283 reduces transactivation capacity and also increases ubiquitin-dependent proteasome degradation. In terms of tissue distribution, expressed in the intestine.

It is found in the nucleus. Functionally, transcription factor which regulates the transcription of multiple genes expressed in the intestinal epithelium. Binds to the promoter of the intestinal sucrase-isomaltase SI and activates SI transcription. Binds to the DNA sequence 5'-ATAAAAACTTAT-3' in the promoter region of VDR and activates VDR transcription. Binds to and activates transcription of LPH. Activates transcription of CLDN2 and intestinal mucin MUC2. Binds to the 5'-AATTTTTTACAACACCT-3' DNA sequence in the promoter region of CA1 and activates CA1 transcription. Important in broad range of functions from early differentiation to maintenance of the intestinal epithelial lining of both the small and large intestine. Binds preferentially to methylated DNA. This chain is Homeobox protein CDX-2 (CDX2), found in Mesocricetus auratus (Golden hamster).